A 178-amino-acid polypeptide reads, in one-letter code: uncharacterized protein (178 aa).

This is an uncharacterized protein from Cestrum parqui (CmYLCV).